The sequence spans 168 residues: Putative insulin-like growth factor 2 antisense gene protein (168 aa).

2 disordered regions span residues 1–91 and 108–168; these read MSKR…ERSN and PLRR…RPGK. Basic residues-rich tracts occupy residues 59–70 and 159–168; these read AQRRRGSARRGA and RWRQPGRPGK.

The polypeptide is Putative insulin-like growth factor 2 antisense gene protein (IGF2-AS) (Homo sapiens (Human)).